Reading from the N-terminus, the 259-residue chain is Cysteine protease IpaJ (259 aa).

Active-site residues include Cys-64, His-206, and Asp-218.

The protein resides in the secreted. The protein localises to the host cytoplasm. Virulence factor that eliminates N-myristoyl protein modifications in infected host cells. Acts as a cysteine protease that cleaves the peptide bond between N-myristoylated Gly-2 and Asn-3 of human ARF1, leading to the elimination of the myristoyl group and alteration of protein trafficking in host cell. Could also cleave an array of N-myristoylated host proteins involved in cellular growth, signal transduction, autophagasome maturation and organelle function. The chain is Cysteine protease IpaJ (ipaJ) from Shigella flexneri.